A 2904-amino-acid chain; its full sequence is Highly reducing polyketide synthase bet1 (2904 aa).

Positions 8-441 (NEPIAIVGSG…GTNAHAIVES (434 aa)) constitute a Ketosynthase family 3 (KS3) domain. Residues Cys-181, His-320, and His-361 each act as for beta-ketoacyl synthase activity in the active site. Residues 553-875 (VFTGQGAQYA…PYHGTLLRGG (323 aa)) are acyl transferase (AT) domain. The N-terminal hotdog fold stretch occupies residues 948–1081 (HQLLGDVSPD…GELKVVLVDE (134 aa)). The PKS/mFAS DH domain occupies 948–1257 (HQLLGDVSPD…FKPVGSDASN (310 aa)). The interval 971–1255 (PREMTWLEGH…VKFKPVGSDA (285 aa)) is dehydratase (DH) domain. The active-site Proton acceptor; for dehydratase activity is His-980. Residues 1098-1257 (MIPVQPSRLY…FKPVGSDASN (160 aa)) are C-terminal hotdog fold. The active-site Proton donor; for dehydratase activity is Asp-1159. The methyltransferase (cMeT) domain stretch occupies residues 1411–1596 (KQSTLWVASI…GFSGIDTMSP (186 aa)). The segment at 2125–2298 (TYWLVGLSGA…RSSVVNVGAI (174 aa)) is ketoreductase (KR)domain. Residues 2407–2486 (EVANVIKQAY…SLVELAAESI (80 aa)) enclose the Carrier domain. Ser-2445 bears the O-(pantetheine 4'-phosphoryl)serine mark. A disordered region spans residues 2492–2543 (PGVPQANANPNGPSSPDSDATESSNQNSDVDVTSTRATSPSTPAATSPDSNV). A compositionally biased stretch (polar residues) spans 2497-2523 (ANANPNGPSSPDSDATESSNQNSDVDV). The span at 2524 to 2541 (TSTRATSPSTPAATSPDS) shows a compositional bias: low complexity. The reductase (R) domain stretch occupies residues 2585–2817 (LTGCSGLLGH…DLVSVETCCE (233 aa)).

It depends on pantetheine 4'-phosphate as a cofactor.

The catalysed reaction is 7 malonyl-CoA + acetyl-CoA + 10 AH2 + 5 S-adenosyl-L-methionine + 2 H(+) = dehydroprobetaenone I + 10 A + 5 S-adenosyl-L-homocysteine + 7 CO2 + 8 CoA + 6 H2O. The protein operates within mycotoxin biosynthesis. Its function is as follows. Highly reducing polyketide synthase; part of the gene cluster that mediates the biosynthesis of betaenones, phytotoxic polyketides involved in leaf spot disease in sugar beets. The first step of the pathway is the synthesis of dehydroprobetaenone I by the polyketide synthase bet1 and the enoyl reductase bet3 via condensation of one acetyl-CoA starter unit with 7 malonyl-CoA units and 5 methylations. The C-terminal reductase (R) domain of bet1 catalyzes the reductive release of the polyketide chain. Because bet1 lacks a designated enoylreductase (ER) domain, the required activity is provided the enoyl reductase bet3. The short-chain dehydrogenase/reductase bet4 then catalyzes reduction of dehydroprobetaenone I to probetaenone I. The cytochrome P450 monooxygenase bet2 catalyzes successive epoxidation, oxidation (resulting from epoxide opening) and hydroxylation to install a tertiary alcohol in the decaline ring to yield betaenone C from dehydroprobetaenone I and betaenone B from probetaenone I. The FAD-linked oxidoreductase (orf1) is probably responsible for the conversion of betaenone C to betaenone A via an intramolecular aldol reaction between C-1 and C-17 to form the bridged tricyclic system in betaenone A. In Neocamarosporium betae (Beet black rot fungus), this protein is Highly reducing polyketide synthase bet1.